Here is a 227-residue protein sequence, read N- to C-terminus: Cytochrome c oxidase subunit 2 (227 aa).

Residues 1-14 (MAHPAQLGFQDAAS) are Mitochondrial intermembrane-facing. Residues 15 to 45 (PIMEELMYFHDHTLMIVFLISSLVLYIISLM) traverse the membrane as a helical segment. Residues 46-59 (LTTELTHTSTMDAQ) are Mitochondrial matrix-facing. The helical transmembrane segment at 60–87 (EVETVWTILPAVILILIALPSLRILYMM) threads the bilayer. Topologically, residues 88–227 (DEITTPSLTL…HFEEWLLSTL (140 aa)) are mitochondrial intermembrane. 6 residues coordinate Cu cation: His-161, Cys-196, Glu-198, Cys-200, His-204, and Met-207. Glu-198 contacts Mg(2+).

It belongs to the cytochrome c oxidase subunit 2 family. In terms of assembly, component of the cytochrome c oxidase (complex IV, CIV), a multisubunit enzyme composed of 14 subunits. The complex is composed of a catalytic core of 3 subunits MT-CO1, MT-CO2 and MT-CO3, encoded in the mitochondrial DNA, and 11 supernumerary subunits COX4I, COX5A, COX5B, COX6A, COX6B, COX6C, COX7A, COX7B, COX7C, COX8 and NDUFA4, which are encoded in the nuclear genome. The complex exists as a monomer or a dimer and forms supercomplexes (SCs) in the inner mitochondrial membrane with NADH-ubiquinone oxidoreductase (complex I, CI) and ubiquinol-cytochrome c oxidoreductase (cytochrome b-c1 complex, complex III, CIII), resulting in different assemblies (supercomplex SCI(1)III(2)IV(1) and megacomplex MCI(2)III(2)IV(2)). Found in a complex with TMEM177, COA6, COX18, COX20, SCO1 and SCO2. Interacts with TMEM177 in a COX20-dependent manner. Interacts with COX20. Interacts with COX16. It depends on Cu cation as a cofactor.

Its subcellular location is the mitochondrion inner membrane. The enzyme catalyses 4 Fe(II)-[cytochrome c] + O2 + 8 H(+)(in) = 4 Fe(III)-[cytochrome c] + 2 H2O + 4 H(+)(out). Functionally, component of the cytochrome c oxidase, the last enzyme in the mitochondrial electron transport chain which drives oxidative phosphorylation. The respiratory chain contains 3 multisubunit complexes succinate dehydrogenase (complex II, CII), ubiquinol-cytochrome c oxidoreductase (cytochrome b-c1 complex, complex III, CIII) and cytochrome c oxidase (complex IV, CIV), that cooperate to transfer electrons derived from NADH and succinate to molecular oxygen, creating an electrochemical gradient over the inner membrane that drives transmembrane transport and the ATP synthase. Cytochrome c oxidase is the component of the respiratory chain that catalyzes the reduction of oxygen to water. Electrons originating from reduced cytochrome c in the intermembrane space (IMS) are transferred via the dinuclear copper A center (CU(A)) of subunit 2 and heme A of subunit 1 to the active site in subunit 1, a binuclear center (BNC) formed by heme A3 and copper B (CU(B)). The BNC reduces molecular oxygen to 2 water molecules using 4 electrons from cytochrome c in the IMS and 4 protons from the mitochondrial matrix. This chain is Cytochrome c oxidase subunit 2 (MT-CO2), found in Microcebus tavaratra (Northern rufous mouse lemur).